The chain runs to 111 residues: Dynein light chain Tctex-type (111 aa).

Belongs to the dynein light chain Tctex-type family.

The protein resides in the cytoplasm. Its subcellular location is the cytoskeleton. Acts as a non-catalytic accessory component of a dynein complex. This is Dynein light chain Tctex-type (dlc1) from Schizosaccharomyces pombe (strain 972 / ATCC 24843) (Fission yeast).